A 157-amino-acid polypeptide reads, in one-letter code: Protein Smg homolog (157 aa).

It belongs to the Smg family.

This is Protein Smg homolog from Xylella fastidiosa (strain M23).